The chain runs to 90 residues: Probable Fe(2+)-trafficking protein (90 aa).

The protein belongs to the Fe(2+)-trafficking protein family. Monomer.

In terms of biological role, could be a mediator in iron transactions between iron acquisition and iron-requiring processes, such as synthesis and/or repair of Fe-S clusters in biosynthetic enzymes. This chain is Probable Fe(2+)-trafficking protein, found in Yersinia pestis bv. Antiqua (strain Antiqua).